A 216-amino-acid polypeptide reads, in one-letter code: Pyrophosphatase PpaX (216 aa).

D12 functions as the Nucleophile in the catalytic mechanism.

The protein belongs to the HAD-like hydrolase superfamily. PpaX family. The cofactor is Mg(2+).

The catalysed reaction is diphosphate + H2O = 2 phosphate + H(+). Hydrolyzes pyrophosphate formed during P-Ser-HPr dephosphorylation by HPrK/P. Might play a role in controlling the intracellular pyrophosphate pool. This chain is Pyrophosphatase PpaX, found in Bacillus pumilus (strain SAFR-032).